The following is a 591-amino-acid chain: L-fucose isomerase (591 aa).

Active-site proton acceptor residues include glutamate 337 and aspartate 361. Positions 337, 361, and 528 each coordinate Mn(2+).

Belongs to the L-fucose isomerase family. In terms of assembly, homohexamer. The cofactor is Mn(2+).

It is found in the cytoplasm. The enzyme catalyses L-fucose = L-fuculose. It participates in carbohydrate degradation; L-fucose degradation; L-lactaldehyde and glycerone phosphate from L-fucose: step 1/3. In terms of biological role, converts the aldose L-fucose into the corresponding ketose L-fuculose. This chain is L-fucose isomerase, found in Escherichia coli (strain 55989 / EAEC).